The chain runs to 557 residues: D-arabinono-1,4-lactone oxidase (557 aa).

An FAD-binding PCMH-type domain is found at 25–209 (FLCKPQAIFQ…THVTLRTCPK (185 aa)). Residues 58–61 (VGSG), 62–63 (HS), 144–148 (ISTGT), I199, and 543–546 (LSGK) contribute to the FAD site. H62 bears the Pros-8alpha-FAD histidine mark.

The protein belongs to the oxygen-dependent FAD-linked oxidoreductase family. FAD is required as a cofactor.

It carries out the reaction D-arabinono-1,4-lactone + O2 = dehydro-D-arabinono-1,4-lactone + H2O2 + H(+). It catalyses the reaction L-galactono-1,4-lactone + O2 = L-ascorbate + H2O2 + H(+). The catalysed reaction is L-gulono-1,4-lactone + O2 = L-ascorbate + H2O2 + H(+). The enzyme catalyses L-xylono-1,4-lactone + O2 = dehydro-L-arabinono-1,4-lactone + H2O2 + H(+). The protein operates within cofactor biosynthesis; D-erythroascorbate biosynthesis; dehydro-D-arabinono-1,4-lactone from D-arabinose: step 2/2. Its function is as follows. D-arabinono-1,4-lactone oxidase that catalyzes the final step of biosynthesis of D-erythroascorbic acid, an important antioxidant and one of the virulence factors enhancing the pathogenicity. Is also able to oxidize L-galactono-1,4-lactone, L-xylono-1,4-lactone and L-gulono-1,4-lactone. The sequence is that of D-arabinono-1,4-lactone oxidase from Candida albicans (strain SC5314 / ATCC MYA-2876) (Yeast).